A 125-amino-acid chain; its full sequence is Large ribosomal subunit protein bL12 (125 aa).

Belongs to the bacterial ribosomal protein bL12 family. As to quaternary structure, homodimer. Part of the ribosomal stalk of the 50S ribosomal subunit. Forms a multimeric L10(L12)X complex, where L10 forms an elongated spine to which 2 to 4 L12 dimers bind in a sequential fashion. Binds GTP-bound translation factors.

Its function is as follows. Forms part of the ribosomal stalk which helps the ribosome interact with GTP-bound translation factors. Is thus essential for accurate translation. The protein is Large ribosomal subunit protein bL12 of Helicobacter pylori (strain ATCC 700392 / 26695) (Campylobacter pylori).